Reading from the N-terminus, the 184-residue chain is MRGMGDDGMGPMAMAPPRSGHATAAAPPPPQHKMAMMMHMTFFWSDRAVVLIRGWPGERGAGMYALCLLFVLALAALTEGLSVLSRRLARRGGGAASSDGGRPAPAPASSAALLTAVHAARMGMAYLVMLAVMSFNVGVLLAAVAGHALGFLLARSRVRPAARDGGGGVACEHGGLPPADGSKT.

A compositionally biased stretch (low complexity) spans 1 to 25; sequence MRGMGDDGMGPMAMAPPRSGHATAA. The segment at 1-27 is disordered; that stretch reads MRGMGDDGMGPMAMAPPRSGHATAAAP. The next 2 helical transmembrane spans lie at 64 to 84 and 124 to 144; these read YALCLLFVLALAALTEGLSVL and MAYLVMLAVMSFNVGVLLAAV.

It belongs to the copper transporter (Ctr) (TC 1.A.56) family. SLC31A subfamily.

The protein localises to the membrane. Functionally, involved in the transport of copper. This is Copper transporter 6 (COPT6) from Oryza sativa subsp. japonica (Rice).